Here is a 405-residue protein sequence, read N- to C-terminus: Fragilysin (405 aa).

Residues 1–25 (MFILNFNKMKNVKLLLMLGTAALLA) form the signal peptide. Position 356 (His356) interacts with Zn(2+). The active site involves Glu357. Positions 360 and 366 each coordinate Zn(2+).

Belongs to the peptidase M10C family. Zn(2+) is required as a cofactor.

It localises to the secreted. It catalyses the reaction Broad proteolytic specificity, bonds hydrolyzed includes -Gly-|-Leu-, -Met-|-Leu-, -Phe-|-Leu-, -Cys-|-Leu-, -Leu-|-Gly-.. Its function is as follows. Diarrheal toxin that hydrolyzes gelatin, azocoll, actin, tropomyosin, and fibrinogen. The chain is Fragilysin (btfP) from Bacteroides fragilis.